Consider the following 332-residue polypeptide: Glycerol-3-phosphate dehydrogenase [NAD(P)+] (332 aa).

NADPH is bound by residues Ser14, Trp15, Arg35, and Lys107. Residues Lys107, Gly137, and Ser139 each contribute to the sn-glycerol 3-phosphate site. Ala141 is a binding site for NADPH. Sn-glycerol 3-phosphate is bound by residues Lys192, Asp245, Ser255, Arg256, and Asn257. The active-site Proton acceptor is the Lys192. Arg256 lines the NADPH pocket. 2 residues coordinate NADPH: Val280 and Glu282.

The protein belongs to the NAD-dependent glycerol-3-phosphate dehydrogenase family.

It localises to the cytoplasm. It catalyses the reaction sn-glycerol 3-phosphate + NAD(+) = dihydroxyacetone phosphate + NADH + H(+). It carries out the reaction sn-glycerol 3-phosphate + NADP(+) = dihydroxyacetone phosphate + NADPH + H(+). It participates in membrane lipid metabolism; glycerophospholipid metabolism. Its function is as follows. Catalyzes the reduction of the glycolytic intermediate dihydroxyacetone phosphate (DHAP) to sn-glycerol 3-phosphate (G3P), the key precursor for phospholipid synthesis. The polypeptide is Glycerol-3-phosphate dehydrogenase [NAD(P)+] (Desulfovibrio desulfuricans (strain ATCC 27774 / DSM 6949 / MB)).